Here is a 333-residue protein sequence, read N- to C-terminus: L-lactate dehydrogenase B chain (333 aa).

NAD(+) is bound by residues 29-57 and arginine 99; that span reads GQVGMACAISILGKGLCDELALVDVLEDK. Arginine 106, asparagine 138, and arginine 169 together coordinate substrate. Asparagine 138 serves as a coordination point for NAD(+). Histidine 193 acts as the Proton acceptor in catalysis. Threonine 248 provides a ligand contact to substrate.

It belongs to the LDH/MDH superfamily. LDH family. In terms of assembly, homotetramer.

The protein localises to the cytoplasm. The catalysed reaction is (S)-lactate + NAD(+) = pyruvate + NADH + H(+). It participates in fermentation; pyruvate fermentation to lactate; (S)-lactate from pyruvate: step 1/1. In terms of biological role, interconverts simultaneously and stereospecifically pyruvate and lactate with concomitant interconversion of NADH and NAD(+). This is L-lactate dehydrogenase B chain (LDHB) from Gallus gallus (Chicken).